A 414-amino-acid polypeptide reads, in one-letter code: MATQRASGLLQRLAQGSLVKQILVGLVLGILLAWISKPAAEAVGLLGTLFVGALKAVAPVLVLMLVMASIANHQHGQKTNIRPILFLYLLGTFSAALAAVVFSFAFPSTLHLSSSAQDIVPPSGIVEVLRGLLMSMVSNPIDALLNANYIGILVWAVGLGFALRHGNETTKNLVNDMSNAVTFMVKLVIRFAPVGIFGLVSSTLATTGFSTLWGYAHLLVVLIGCMLLVALMVNPLLVFWKIRRNPYPLVFACLRESGVYAFFTRSSAANIPVNMALCEKLNLDRDTYSVSIPLGATINMAGAAITITVLTLAAVHTLGVPVDLPTALLLSVVASLCACGASGVAGGSLLLIPLACNMFGIPNDIAMQVVAVGFIIGVLQDSCETALNSSTDVLFTAAACQAEDERLANNALRS.

8 helical membrane passes run 16-36, 46-66, 84-104, 143-163, 180-200, 219-239, 300-320, and 332-352; these read GSLV…AWIS, LGTL…LMLV, ILFL…VFSF, ALLN…GFAL, AVTF…FGLV, LVVL…LLVF, MAGA…TLGV, and VVAS…LLLI.

The protein belongs to the dicarboxylate/amino acid:cation symporter (DAACS) (TC 2.A.23) family.

It is found in the cell inner membrane. It carries out the reaction L-serine(in) + Na(+)(in) = L-serine(out) + Na(+)(out). The catalysed reaction is L-threonine(in) + Na(+)(in) = L-threonine(out) + Na(+)(out). Involved in the import of serine and threonine into the cell, with the concomitant import of sodium (symport system). This Salmonella heidelberg (strain SL476) protein is Serine/threonine transporter SstT.